Here is a 262-residue protein sequence, read N- to C-terminus: Phosphonates import ATP-binding protein PhnC (262 aa).

The ABC transporter domain occupies 5 to 253 (IRVEKLAKTF…RFDHLYRSIN (249 aa)). Position 37–44 (37–44 (GPSGSGKS)) interacts with ATP.

This sequence belongs to the ABC transporter superfamily. Phosphonates importer (TC 3.A.1.9.1) family. The complex is composed of two ATP-binding proteins (PhnC), two transmembrane proteins (PhnE) and a solute-binding protein (PhnD).

The protein resides in the cell inner membrane. It carries out the reaction phosphonate(out) + ATP + H2O = phosphonate(in) + ADP + phosphate + H(+). Functionally, part of the ABC transporter complex PhnCDE involved in phosphonates import. Responsible for energy coupling to the transport system. This chain is Phosphonates import ATP-binding protein PhnC, found in Escherichia coli (strain UTI89 / UPEC).